Here is a 268-residue protein sequence, read N- to C-terminus: ClpXP adapter protein SpxH (268 aa).

Belongs to the SpxH family. Interacts with Spx.

The protein resides in the cytoplasm. In terms of biological role, adapter protein required for efficient degradation of Spx by ClpXP under non-stress conditions. Interaction with Spx stabilizes Spx and exposes the C-terminus of Spx for recognition and proteolysis by ClpXP. This chain is ClpXP adapter protein SpxH, found in Staphylococcus aureus (strain MRSA252).